The following is a 508-amino-acid chain: CXXC-type zinc finger protein 1 (508 aa).

Residues 10–47 form a CXXC-type zinc finger; it reads EDVWKERCMNCIRCNDEKNCGTCWPCRNGKTCDMRKCF. Disordered stretches follow at residues 95 to 156 and 453 to 508; these read QQVE…EPDK and KSQS…TQNN. Composition is skewed to low complexity over residues 113–123 and 454–481; these read AAAAAQQRKAN and SQSTSSSASAHGATTPISSTSSSSSSSS.

In terms of assembly, component of the SET2 complex (also known as the SET1/COMPASS complex), which contains at least set-2, swd-2.1, cfp-1, rbbp-5, wdr-5.1, dpy-30 and ash-2. Within the complex, interacts with wdr-5.1, ash-2 and dpy-30. Also interacts with the SIN3S complex, which contains at least sin-3, hda-1, athp-1 and mrg-1. Interacts with sin-3, hda-1 and mrg-1.

Its subcellular location is the nucleus. Transcriptional activator that exhibits a unique DNA binding specificity for CpG motifs; enriched at promoters containing the trimethylation mark on histone H3 'Lys-4' (H3K4me3). Forms part of the SET2 complex and interacts with the SIN3S HDAC complex at promoters. Required for H3K4 trimethylation and plays a repressive role in the expression of heat shock and salt-inducible genes. Required for fertility, in cooperation with class I histone deacetylases (HDACs). The sequence is that of CXXC-type zinc finger protein 1 from Caenorhabditis elegans.